A 151-amino-acid polypeptide reads, in one-letter code: Putative transcriptional regulatory protein TK2151 (151 aa).

This sequence belongs to the Tfx family.

In terms of biological role, putative transcriptional regulator. This Thermococcus kodakarensis (strain ATCC BAA-918 / JCM 12380 / KOD1) (Pyrococcus kodakaraensis (strain KOD1)) protein is Putative transcriptional regulatory protein TK2151.